Here is a 345-residue protein sequence, read N- to C-terminus: 3-isopropylmalate dehydrogenase (345 aa).

Position 74–87 (74–87 (GPKWDGLPRKIRPE)) interacts with NAD(+). 4 residues coordinate substrate: Arg94, Arg104, Arg132, and Asp217. Positions 217, 241, and 245 each coordinate Mg(2+). 274 to 286 (GSAPDIAGKGLAN) provides a ligand contact to NAD(+).

This sequence belongs to the isocitrate and isopropylmalate dehydrogenases family. LeuB type 1 subfamily. In terms of assembly, homodimer. Requires Mg(2+) as cofactor. It depends on Mn(2+) as a cofactor.

The protein resides in the cytoplasm. The enzyme catalyses (2R,3S)-3-isopropylmalate + NAD(+) = 4-methyl-2-oxopentanoate + CO2 + NADH. Its pathway is amino-acid biosynthesis; L-leucine biosynthesis; L-leucine from 3-methyl-2-oxobutanoate: step 3/4. Catalyzes the oxidation of 3-carboxy-2-hydroxy-4-methylpentanoate (3-isopropylmalate) to 3-carboxy-4-methyl-2-oxopentanoate. The product decarboxylates to 4-methyl-2 oxopentanoate. The sequence is that of 3-isopropylmalate dehydrogenase (leuB) from Thermus thermophilus (strain ATCC BAA-163 / DSM 7039 / HB27).